Consider the following 198-residue polypeptide: Heme oxygenase PigA (198 aa).

His26 is a heme b binding site.

Belongs to the heme oxygenase family.

It carries out the reaction heme b + 3 AH2 + 3 O2 + 2 H(+) = biliverdin IXbeta + CO + Fe(2+) + 3 A + 3 H2O. The catalysed reaction is heme b + 3 AH2 + 3 O2 + 3 H(+) = biliverdin IXdelta + CO + Fe(2+) + 3 A + 3 H2O. Its function is as follows. Involved in heme degradation. Catalyzes the degradation of heme to biliverdin, with the release of iron. Forms biliverdin delta (70%) and beta (30%). Under anaerobic conditions ferredoxin--NADP(+) reductase (fpr) can provide the necessary electrons; Bfd is not required. The polypeptide is Heme oxygenase PigA (Pseudomonas aeruginosa (strain ATCC 15692 / DSM 22644 / CIP 104116 / JCM 14847 / LMG 12228 / 1C / PRS 101 / PAO1)).